We begin with the raw amino-acid sequence, 198 residues long: Pyridoxal 5'-phosphate synthase subunit PdxT (198 aa).

L-glutamine is bound at residue G49–S51. C81 serves as the catalytic Nucleophile. Residues R113 and I141–R142 contribute to the L-glutamine site. Residues H177 and E179 each act as charge relay system in the active site.

The protein belongs to the glutaminase PdxT/SNO family. In terms of assembly, in the presence of PdxS, forms a dodecamer of heterodimers. Only shows activity in the heterodimer.

It catalyses the reaction aldehydo-D-ribose 5-phosphate + D-glyceraldehyde 3-phosphate + L-glutamine = pyridoxal 5'-phosphate + L-glutamate + phosphate + 3 H2O + H(+). It carries out the reaction L-glutamine + H2O = L-glutamate + NH4(+). The protein operates within cofactor biosynthesis; pyridoxal 5'-phosphate biosynthesis. In terms of biological role, catalyzes the hydrolysis of glutamine to glutamate and ammonia as part of the biosynthesis of pyridoxal 5'-phosphate. The resulting ammonia molecule is channeled to the active site of PdxS. The protein is Pyridoxal 5'-phosphate synthase subunit PdxT of Mycobacterium avium (strain 104).